A 269-amino-acid chain; its full sequence is Eukaryotic translation initiation factor 3 subunit G-1 (269 aa).

Residues 188–266 enclose the RRM domain; that stretch reads AAIRISNLSE…LILSVEWSKP (79 aa).

It belongs to the eIF-3 subunit G family. Component of the eukaryotic translation initiation factor 3 (eIF-3) complex. The eIF-3 complex interacts with pix.

It localises to the cytoplasm. Its function is as follows. RNA-binding component of the eukaryotic translation initiation factor 3 (eIF-3) complex, which is involved in protein synthesis of a specialized repertoire of mRNAs and, together with other initiation factors, stimulates binding of mRNA and methionyl-tRNAi to the 40S ribosome. The eIF-3 complex specifically targets and initiates translation of a subset of mRNAs involved in cell proliferation. This subunit can bind 18S rRNA. The polypeptide is Eukaryotic translation initiation factor 3 subunit G-1 (Drosophila erecta (Fruit fly)).